We begin with the raw amino-acid sequence, 99 residues long: Large ribosomal subunit protein bL21 (99 aa).

It belongs to the bacterial ribosomal protein bL21 family. Part of the 50S ribosomal subunit. Contacts protein L20.

Its function is as follows. This protein binds to 23S rRNA in the presence of protein L20. The chain is Large ribosomal subunit protein bL21 from Deinococcus geothermalis (strain DSM 11300 / CIP 105573 / AG-3a).